The primary structure comprises 440 residues: Sequestosome-1 (440 aa).

Position 2 is an N-acetylalanine (A2). Residues 2-50 (ASLTVKAYLLGKEDAAREIRRFSFCCSPEPEAEAEAAAGPGPCERLLSR) are interaction with LCK. The PB1 domain maps to 3-102 (SLTVKAYLLG…DIFRIYIKEK (100 aa)). S24 is subject to Phosphoserine. The interval 43 to 107 (PCERLLSRVA…YIKEKKECRR (65 aa)) is interaction with PRKCZ and dimerization. An interaction with PAWR region spans residues 50 to 80 (RVAALFPALRPGGFQAHYRDEDGDLVAFSSD). A Glycyl lysine isopeptide (Lys-Gly) (interchain with G-Cter in ubiquitin) cross-link involves residue K91. An interaction with GABRR3 region spans residues 122 to 224 (VHPNVICDGC…EARPGPTAES (103 aa)). The segment at 123-173 (HPNVICDGCNGPVVGTRYKCSVCPDYDLCSVCEGKGLHRGHTKLAFPSPFG) adopts a ZZ-type zinc-finger fold. Zn(2+)-binding residues include C128, C131, C142, and C145. Y148 carries the post-translational modification Phosphotyrosine. Residues C151, C154, H160, and H163 each coordinate Zn(2+). A phosphoserine mark is found at S170 and S176. The LIM protein-binding (LB) stretch occupies residues 170–220 (SPFGHLSEGFSHSRWLRKVKHGHFGWPGWEMGPPGNWSPRPPRAGEARPGP). K189 is covalently cross-linked (Glycyl lysine isopeptide (Lys-Gly) (interchain with G-Cter in ubiquitin)). Residues 196–235 (PGWEMGPPGNWSPRPPRAGEARPGPTAESASGPSEDPSVN) form a disordered region. A phosphoserine mark is found at S207, S233, S249, and S266. Residues 228–233 (PSEDPS) carry the TRAF6-binding motif. The interval 264–390 (KRSRLTPVSP…ALYPHLPPEA (127 aa)) is disordered. T269 is subject to Phosphothreonine. An interaction with NTRK1 region spans residues 269–440 (TPVSPESSST…IQYSKHPPPL (172 aa)). A phosphoserine mark is found at S272 and S282. Low complexity predominate over residues 283 to 296 (SSQPSSCCSDPSKP). Residues C289 and C290 are each lipidated (S-palmitoyl cysteine). S306 is modified (phosphoserine). The span at 310–324 (QMRKIALESEGRPEE) shows a compositional bias: basic and acidic residues. Residues 321–342 (RPEEQMESDNCSGGDDDWTHLS) form an MAP1LC3B-binding region. A phosphoserine mark is found at S328 and S332. The LIR motif lies at 336–341 (DDWTHL). Residues 337–347 (DWTHLSSKEVD) are compositionally biased toward basic and acidic residues. The interval 347–352 (DPSTGE) is interaction with KEAP1. S349 is modified (phosphoserine; by ULK1). Positions 351 to 373 (GELQSLQMPESEGPSSLDPSQEG) are enriched in polar residues. Residues S355, S361, S365, and S366 each carry the phosphoserine modification. In terms of domain architecture, UBA spans 389 to 434 (EADPRLIESLSQMLSMGFSDEGGWLTRLLQTKNYDIGAALDTIQYS). The residue at position 403 (S403) is a Phosphoserine; by CK2, ULK1 and TBK1. The residue at position 407 (S407) is a Phosphoserine; by ULK1. 2 positions are modified to N6-acetyllysine; alternate: K420 and K435. Residue K420 forms a Glycyl lysine isopeptide (Lys-Gly) (interchain with G-Cter in ubiquitin); alternate linkage. K435 participates in a covalent cross-link: Glycyl lysine isopeptide (Lys-Gly) (interchain with G-Cter in SUMO2); alternate.

In terms of assembly, homooligomer or heterooligomer; may form homotypic arrays. Dimerization interferes with ubiquitin binding. Component of a ternary complex with PAWR and PRKCZ. Forms a complex with JUB/Ajuba, PRKCZ and TRAF6. Identified in a complex with TRAF6 and CYLD. Identified in a heterotrimeric complex with ubiquitin and ZFAND5, where ZFAND5 and SQSTM1 both interact with the same ubiquitin molecule. Interacts (via LIR motif) with MAP1LC3A and MAP1LC3B, as well as with other ATG8 family members, including GABARAP, GABARAPL1 and GABARAPL2; these interactions are necessary for the recruitment MAP1 LC3 family members to inclusion bodies containing polyubiquitinated protein aggregates and for their degradation by autophagy. Interacts directly with PRKCI and PRKCZ. Interacts with EBI3, LCK, RASA1, NR2F2, NTRK1, NTRK2, NTRK3, NBR1, MAP2K5 and MAPKAPK5. Upon TNF-alpha stimulation, interacts with RIPK1 probably bridging IKBKB to the TNF-R1 complex composed of TNF-R1/TNFRSF1A, TRADD and RIPK1. Interacts with the proteasome subunits PSMD4 and PSMC2. Interacts with TRAF6. Interacts with 'Lys-63'-linked polyubiquitinated MAPT/TAU. Interacts with FHOD3. Interacts with CYLD. Interacts with SESN1. Interacts with SESN2. Interacts with ULK1. Interacts with UBD. Interacts with WDR81; the interaction is direct and regulates the interaction of SQSTM1 with ubiquitinated proteins. Interacts with WDFY3; this interaction is required to recruit WDFY3 to cytoplasmic bodies and to PML bodies. Interacts with LRRC25. Interacts with STING1; leading to relocalization of STING1 to autophagosomes. Interacts (when phosphorylated at Ser-349) with KEAP1; the interaction is direct and inactivates the BCR(KEAP1) complex by sequestering KEAP1 in inclusion bodies, promoting its degradation. Interacts with MOAP1; promoting dissociation of SQSTM1 inclusion bodies that sequester KEAP1. Interacts with GBP1. Interacts with TAX1BP1. Interacts with (ubiquitinated) PEX5; specifically binds PEX5 ubiquitinated at 'Lys-209' in response to reactive oxygen species (ROS). Interacts (via PB1 domain) with TNS2; the interaction leads to sequestration of TNS2 in cytoplasmic aggregates with SQSTM1 and promotes TNS2 ubiquitination and proteasomal degradation. Interacts with IRS1; the interaction is disrupted by the presence of tensin TNS2. Interacts with TRIM5. Interacts with TRIM11 (when ubiquitinated); promoting AIM2 recruitment to autophagosomes and autophagy-dependent degradation of AIM2. Interacts with TRIM13. Interacts with TRIM16. Interacts with TRIM23. Interacts with TRIM50. Interacts with TRIM55. Interacts with ECSIT; this interaction inhibits TLR4 signaling via functional regulation of the TRAF6-ECSIT complex. Interacts with GABRR1, GABRR2 and GABRR3. Interacts with WDR83. Interacts with GRB2. Interacts with USP12; the interaction is independent of USP12 deubiquitinase activity and may be involved in regulation of autophagic flux. Interacts with ASB6. Post-translationally, phosphorylation at Ser-407 by ULK1 destabilizes the UBA dimer interface and increases binding affinity to ubiquitinated proteins. Phosphorylation at Ser-407 also primes for subsequent phosphorylation at Ser-403. Phosphorylation at Ser-403 by CK2 or ULK1 promotes binding to ubiquitinated proteins by increasing the affinity between the UBA domain and polyubiquitin chains. Phosphorylation at Ser-403 by ULK1 is stimulated by SESN2. Phosphorylated at Ser-403 by TBK1, leading to promote relocalization of 'Lys-63'-linked ubiquitinated STING1 to autophagosomes. Phosphorylation at Ser-349 by ULK1 promotes interaction with KEAP1 and inactivation of the BCR(KEAP1) complex, promoting NFE2L2/NRF2 nuclear accumulation and expression of phase II detoxifying enzymes. Phosphorylated in vitro by TTN. In terms of processing, ubiquitinated by UBE2J1 and RNF26 at Lys-435: ubiquitinated SQSTM1 attracts specific vesicle-associated adapters, forming a molecular bridge that restrains cognate vesicles in the perinuclear region and organizes the endosomal pathway for efficient cargo transport. Ubiquitination by UBE2D2 and UBE2D3 increases its ability to bind polyubiquitin chains by destabilizing the UBA dimer interface. Deubiquitination by USP15 releases target vesicles for fast transport into the cell periphery. Ubiquitinated by the BCR(KEAP1) complex at Lys-420, increasing SQSTM1 sequestering activity and promoting its degradation. Ubiquitinated via 'Lys-29' and 'Lys-33'-linked polyubiquitination leading to xenophagic targeting of bacteria and inhibition of their replication. Acetylated at Lys-420 and Lys-435 by KAT5/TIP60, promotes activity by destabilizing the UBA dimer interface and increases binding affinity to ubiquitinated proteins. Deacetylated by HDAC6. Post-translationally, palmitoylation at Cys-289 and Cys-290 by ZDHHC19 is required for efficient autophagic degradation of SQSTM1-cargo complexes by promoting affinity for ATG8 proteins and recruitment of p62 bodies to autophagosomes. Dealmitoylated at Cys-289 and Cys-290 by LYPLA1. In terms of processing, (Microbial infection) Cleaved by S.pyogenes SpeB protease; leading to its degradation. Degradation by SpeB prevents autophagy, promoting to S.pyogenes intracellular replication. (Microbial infection) Deubiquitinated by Epstein-Barr virus BPLF1; leading to inhibition of the recruitment of MAP1LC3A/LC3 to SQSTM1-positive structures. As to expression, ubiquitously expressed.

Its subcellular location is the cytoplasmic vesicle. It localises to the autophagosome. The protein resides in the preautophagosomal structure. It is found in the cytoplasm. The protein localises to the cytosol. Its subcellular location is the nucleus. It localises to the PML body. The protein resides in the late endosome. It is found in the lysosome. The protein localises to the endoplasmic reticulum. Its subcellular location is the myofibril. It localises to the sarcomere. Molecular adapter required for selective macroautophagy (aggrephagy) by acting as a bridge between polyubiquitinated proteins and autophagosomes. Promotes the recruitment of ubiquitinated cargo proteins to autophagosomes via multiple domains that bridge proteins and organelles in different steps. SQSTM1 first mediates the assembly and removal of ubiquitinated proteins by undergoing liquid-liquid phase separation upon binding to ubiquitinated proteins via its UBA domain, leading to the formation of insoluble cytoplasmic inclusions, known as p62 bodies. SQSTM1 then interacts with ATG8 family proteins on autophagosomes via its LIR motif, leading to p62 body recruitment to autophagosomes, followed by autophagic clearance of ubiquitinated proteins. SQSTM1 is itself degraded along with its ubiquitinated cargos. Also required to recruit ubiquitinated proteins to PML bodies in the nucleus. Also involved in autophagy of peroxisomes (pexophagy) in response to reactive oxygen species (ROS) by acting as a bridge between ubiquitinated PEX5 receptor and autophagosomes. Acts as an activator of the NFE2L2/NRF2 pathway via interaction with KEAP1: interaction inactivates the BCR(KEAP1) complex by sequestering the complex in inclusion bodies, promoting nuclear accumulation of NFE2L2/NRF2 and subsequent expression of cytoprotective genes. Promotes relocalization of 'Lys-63'-linked ubiquitinated STING1 to autophagosomes. Involved in endosome organization by retaining vesicles in the perinuclear cloud: following ubiquitination by RNF26, attracts specific vesicle-associated adapters, forming a molecular bridge that restrains cognate vesicles in the perinuclear region and organizes the endosomal pathway for efficient cargo transport. Sequesters tensin TNS2 into cytoplasmic puncta, promoting TNS2 ubiquitination and proteasomal degradation. May regulate the activation of NFKB1 by TNF-alpha, nerve growth factor (NGF) and interleukin-1. May play a role in titin/TTN downstream signaling in muscle cells. Adapter that mediates the interaction between TRAF6 and CYLD. The protein is Sequestosome-1 of Homo sapiens (Human).